The following is an 86-amino-acid chain: MAQKKGGGSTRNGRDSESKRLGVKVYGGQSILAGSIIVRQRGTRFHPGVNVGVGKDHTLFALANGKVHFSVKGALNKPTVSVVAAE.

Positions methionine 1–threonine 10 are enriched in gly residues. Residues methionine 1 to arginine 20 are disordered.

This sequence belongs to the bacterial ribosomal protein bL27 family.

This chain is Large ribosomal subunit protein bL27, found in Bordetella parapertussis (strain 12822 / ATCC BAA-587 / NCTC 13253).